We begin with the raw amino-acid sequence, 205 residues long: Glutathione peroxidase 1 (205 aa).

Phosphoserine is present on S37. U52 is an active-site residue. Position 52 (U52) is a non-standard amino acid, selenocysteine. N6-acetyllysine; alternate occurs at positions 91 and 117. An N6-succinyllysine; alternate mark is found at K91 and K117. Residue K117 is glycosylated (N-linked (Glc) (glycation) lysine; in vitro). Residue K124 is modified to N6-acetyllysine. Residue K151 is modified to N6-acetyllysine; alternate. K151 is subject to N6-succinyllysine; alternate. 2 positions are modified to phosphoserine: S200 and S204.

The protein belongs to the glutathione peroxidase family. Homotetramer. Interacts with MIEN1. Post-translationally, during periods of oxidative stress, Sec-52 may react with a superoxide radical, irreversibly lose hydroselenide and be converted to dehydroalanine.

The protein resides in the cytoplasm. It localises to the mitochondrion. The catalysed reaction is 2 glutathione + H2O2 = glutathione disulfide + 2 H2O. It catalyses the reaction a hydroperoxy polyunsaturated fatty acid + 2 glutathione = a hydroxy polyunsaturated fatty acid + glutathione disulfide + H2O. The enzyme catalyses tert-butyl hydroperoxide + 2 glutathione = tert-butanol + glutathione disulfide + H2O. It carries out the reaction cumene hydroperoxide + 2 glutathione = 2-phenylpropan-2-ol + glutathione disulfide + H2O. The catalysed reaction is (13S)-hydroperoxy-(9Z,11E)-octadecadienoate + 2 glutathione = (13S)-hydroxy-(9Z,11E)-octadecadienoate + glutathione disulfide + H2O. It catalyses the reaction (9S)-hydroperoxy-(10E,12Z)-octadecadienoate + 2 glutathione = (9S)-hydroxy-(10E,12Z)-octadecadienoate + glutathione disulfide + H2O. The enzyme catalyses (5S)-hydroperoxy-(6E,8Z,11Z,14Z)-eicosatetraenoate + 2 glutathione = (5S)-hydroxy-(6E,8Z,11Z,14Z)-eicosatetraenoate + glutathione disulfide + H2O. It carries out the reaction (12S)-hydroperoxy-(5Z,8Z,10E,14Z)-eicosatetraenoate + 2 glutathione = (12S)-hydroxy-(5Z,8Z,10E,14Z)-eicosatetraenoate + glutathione disulfide + H2O. The catalysed reaction is (12R)-hydroperoxy-(5Z,8Z,10E,14Z)-eicosatetraenoate + 2 glutathione = (12R)-hydroxy-(5Z,8Z,10E,14Z)-eicosatetraenoate + glutathione disulfide + H2O. It catalyses the reaction (15S)-hydroperoxy-(5Z,8Z,11Z,13E)-eicosatetraenoate + 2 glutathione = (15S)-hydroxy-(5Z,8Z,11Z,13E)-eicosatetraenoate + glutathione disulfide + H2O. The enzyme catalyses (5S)-hydroperoxy-(6E,8Z,11Z,14Z,17Z)-eicosapentaenoate + 2 glutathione = (5S)-hydroxy-(6E,8Z,11Z,14Z,17Z)-eicosapentaenoate + glutathione disulfide + H2O. It carries out the reaction (15S)-hydroperoxy-(5Z,8Z,11Z,13E,17Z)-eicosapentaenoate + 2 glutathione = (15S)-hydroxy-(5Z,8Z,11Z,13E,17Z)-eicosapentaenoate + glutathione disulfide + H2O. The catalysed reaction is (15S)-hydroperoxy-(11Z,13E)-eicosadienoate + 2 glutathione = (15S)-hydroxy-(11Z,13E)-eicosadienoate + glutathione disulfide + H2O. It catalyses the reaction (17S)-hydroperoxy-(4Z,7Z,10Z,13Z,15E,19Z)-docosahexaenoate + 2 glutathione = (17S)-hydroxy-(4Z,7Z,10Z,13Z,15E,19Z)-docosahexaenoate + glutathione disulfide + H2O. Catalyzes the reduction of hydroperoxides in a glutathione-dependent manner thus regulating cellular redox homeostasis. Can reduce small soluble hydroperoxides such as H2O2, cumene hydroperoxide and tert-butyl hydroperoxide, as well as several fatty acid-derived hydroperoxides. In platelets catalyzes the reduction of 12-hydroperoxyeicosatetraenoic acid, the primary product of the arachidonate 12-lipoxygenase pathway. This is Glutathione peroxidase 1 (GPX1) from Bos taurus (Bovine).